The primary structure comprises 452 residues: Translation initiation factor eIF2B subunit gamma (452 aa).

At Met1 the chain carries N-acetylmethionine. At Ser260 the chain carries Phosphoserine.

It belongs to the eIF-2B gamma/epsilon subunits family. As to quaternary structure, component of the translation initiation factor 2B (eIF2B) complex which is a heterodecamer of two sets of five different subunits: alpha, beta, gamma, delta and epsilon. Subunits alpha, beta and delta comprise a regulatory subcomplex and subunits epsilon and gamma comprise a catalytic subcomplex. Within the complex, the hexameric regulatory complex resides at the center, with the two heterodimeric catalytic subcomplexes bound on opposite sides.

Its subcellular location is the cytoplasm. The protein localises to the cytosol. Activated by the chemical integrated stress response (ISR) inhibitor ISRIB which stimulates guanine nucleotide exchange factor activity for both phosphorylated and unphosphorylated eIF2. Its function is as follows. Acts as a component of the translation initiation factor 2B (eIF2B) complex, which catalyzes the exchange of GDP for GTP on the eukaryotic initiation factor 2 (eIF2) complex gamma subunit. Its guanine nucleotide exchange factor activity is repressed when bound to eIF2 complex phosphorylated on the alpha subunit, thereby limiting the amount of methionyl-initiator methionine tRNA available to the ribosome and consequently global translation is repressed. The sequence is that of Translation initiation factor eIF2B subunit gamma (EIF2B3) from Macaca fascicularis (Crab-eating macaque).